The following is a 241-amino-acid chain: Carboxy-S-adenosyl-L-methionine synthase (241 aa).

S-adenosyl-L-methionine contacts are provided by residues Tyr-38, 63 to 65 (GCS), 88 to 89 (DN), 116 to 117 (DI), Asn-131, and Arg-198.

The protein belongs to the class I-like SAM-binding methyltransferase superfamily. Cx-SAM synthase family. In terms of assembly, homodimer.

The catalysed reaction is prephenate + S-adenosyl-L-methionine = carboxy-S-adenosyl-L-methionine + 3-phenylpyruvate + H2O. In terms of biological role, catalyzes the conversion of S-adenosyl-L-methionine (SAM) to carboxy-S-adenosyl-L-methionine (Cx-SAM). This is Carboxy-S-adenosyl-L-methionine synthase from Mannheimia succiniciproducens (strain KCTC 0769BP / MBEL55E).